Here is a 126-residue protein sequence, read N- to C-terminus: MSNRKLGRTSSQRKAMLRDLTTDLIINETIVTTEARAKEVRRTVEKMITLGKKGDLSARRAAAAYVRNEIAIKDFNEETETFPTALQKLFNDLAKRYEGRNGGYTRILKVEPRRGDAAPMAIIELV.

Belongs to the bacterial ribosomal protein bL17 family. As to quaternary structure, part of the 50S ribosomal subunit. Contacts protein L32.

The protein is Large ribosomal subunit protein bL17 of Lactococcus lactis subsp. lactis (strain IL1403) (Streptococcus lactis).